A 175-amino-acid chain; its full sequence is ATP synthase subunit b (175 aa).

Residues 13-33 (LLSPNPGLIFWTAVTFLLLLL) traverse the membrane as a helical segment.

This sequence belongs to the ATPase B chain family. In terms of assembly, F-type ATPases have 2 components, F(1) - the catalytic core - and F(0) - the membrane proton channel. F(1) has five subunits: alpha(3), beta(3), gamma(1), delta(1), epsilon(1). F(0) has four main subunits: a(1), b(2) and c(10-14). The alpha and beta chains form an alternating ring which encloses part of the gamma chain. F(1) is attached to F(0) by a central stalk formed by the gamma and epsilon chains, while a peripheral stalk is formed by the delta and b chains.

Its subcellular location is the cell inner membrane. F(1)F(0) ATP synthase produces ATP from ADP in the presence of a proton or sodium gradient. F-type ATPases consist of two structural domains, F(1) containing the extramembraneous catalytic core and F(0) containing the membrane proton channel, linked together by a central stalk and a peripheral stalk. During catalysis, ATP synthesis in the catalytic domain of F(1) is coupled via a rotary mechanism of the central stalk subunits to proton translocation. Its function is as follows. Component of the F(0) channel, it forms part of the peripheral stalk, linking F(1) to F(0). The sequence is that of ATP synthase subunit b from Chloroherpeton thalassium (strain ATCC 35110 / GB-78).